A 201-amino-acid chain; its full sequence is Casparian strip membrane protein 7 (201 aa).

Over residues Met1–Glu11 the composition is skewed to acidic residues. Positions Met1 to Leu26 are disordered. The Cytoplasmic segment spans residues Met1–Gly34. The helical transmembrane segment at Val35–Ala55 threads the bilayer. Residues Gly56 to Thr86 are Extracellular-facing. A helical membrane pass occupies residues Leu87–Ala107. Residues Ser108–Asp128 lie on the Cytoplasmic side of the membrane. A helical membrane pass occupies residues Thr129–Ala149. Topologically, residues His150–Arg171 are extracellular. Residues Ile172–Leu192 form a helical membrane-spanning segment. Residues Ser193–Ala201 lie on the Cytoplasmic side of the membrane.

The protein belongs to the Casparian strip membrane proteins (CASP) family. As to quaternary structure, homodimer and heterodimers.

It localises to the cell membrane. Functionally, regulates membrane-cell wall junctions and localized cell wall deposition. Required for establishment of the Casparian strip membrane domain (CSD) and the subsequent formation of Casparian strips, a cell wall modification of the root endodermis that determines an apoplastic barrier between the intraorganismal apoplasm and the extraorganismal apoplasm and prevents lateral diffusion. The chain is Casparian strip membrane protein 7 from Oryza sativa subsp. japonica (Rice).